The chain runs to 159 residues: Cyclic pyranopterin monophosphate synthase (159 aa).

Residues 75–77 (LCH) and 113–114 (ME) contribute to the substrate site. Asp128 is an active-site residue.

The protein belongs to the MoaC family. As to quaternary structure, homohexamer; trimer of dimers.

It catalyses the reaction (8S)-3',8-cyclo-7,8-dihydroguanosine 5'-triphosphate = cyclic pyranopterin phosphate + diphosphate. Its pathway is cofactor biosynthesis; molybdopterin biosynthesis. Its function is as follows. Catalyzes the conversion of (8S)-3',8-cyclo-7,8-dihydroguanosine 5'-triphosphate to cyclic pyranopterin monophosphate (cPMP). This Vibrio atlanticus (strain LGP32) (Vibrio splendidus (strain Mel32)) protein is Cyclic pyranopterin monophosphate synthase.